The sequence spans 188 residues: Adrenodoxin, mitochondrial (188 aa).

A mitochondrion-targeting transit peptide spans 1–64; that stretch reads MAAAPGARLL…RPLSVSARAR (64 aa). A Phosphoserine modification is found at Ser67. One can recognise a 2Fe-2S ferredoxin-type domain in the interval 69-175; it reads DKVTVHFKNR…NMTVRVPEAV (107 aa). Lys70 is modified (N6-acetyllysine; alternate). Residue Lys70 is modified to N6-succinyllysine; alternate. [2Fe-2S] cluster contacts are provided by Cys110, Cys116, Cys119, and Cys156. Residue Lys162 is modified to N6-succinyllysine. Ser181 carries the post-translational modification Phosphoserine.

This sequence belongs to the adrenodoxin/putidaredoxin family. As to quaternary structure, interacts with CYP11A1. [2Fe-2S] cluster serves as cofactor. Found in all tissues, most abundant in adrenals, ovaries and testes.

Its subcellular location is the mitochondrion matrix. Its function is as follows. Essential for the synthesis of various steroid hormones. Participates in the reduction of mitochondrial cytochrome P450 for steroidogenesis. Transfers electrons from adrenodoxin reductase to CYP11A1, a cytochrome P450 that catalyzes cholesterol side-chain cleavage. Does not form a ternary complex with adrenodoxin reductase and CYP11A1 but shuttles between the two enzymes to transfer electrons. This Rattus norvegicus (Rat) protein is Adrenodoxin, mitochondrial (Fdx1).